Reading from the N-terminus, the 545-residue chain is MVEKDIYMCAEIIIRPQAYNLRLLQKENLKKMSVCSSTPVPILSFTERAKSLTEIQQAHAFMLKTGLFHDTFSASKLVAFAATNPEPKTVSYAHSILNRIGSPNGFTHNSVIRAYANSSTPEVALTVFREMLLGPVFPDKYSFTFVLKACAAFCGFEEGRQIHGLFIKSGLVTDVFVENTLVNVYGRSGYFEIARKVLDRMPVRDAVSWNSLLSAYLEKGLVDEARALFDEMEERNVESWNFMISGYAAAGLVKEAKEVFDSMPVRDVVSWNAMVTAYAHVGCYNEVLEVFNKMLDDSTEKPDGFTLVSVLSACASLGSLSQGEWVHVYIDKHGIEIEGFLATALVDMYSKCGKIDKALEVFRATSKRDVSTWNSIISDLSVHGLGKDALEIFSEMVYEGFKPNGITFIGVLSACNHVGMLDQARKLFEMMSSVYRVEPTIEHYGCMVDLLGRMGKIEEAEELVNEIPADEASILLESLLGACKRFGQLEQAERIANRLLELNLRDSSGYAQMSNLYASDGRWEKVIDGRRNMRAERVNRSLDVA.

PPR repeat units follow at residues 104-138, 139-173, 174-204, 205-239, 240-266, 267-301, 303-337, 338-368, 369-403, 404-434, and 440-474; these read NGFT…PVFP, DKYS…GLVT, DVFV…MPVR, DAVS…NVES, WNFM…MPVR, DVVS…STEK, DGFT…GIEI, EGFL…TSKR, DVST…GFKP, NGIT…MSSV, and TIEH…EASI. Positions 475-545 are type E motif; sequence LLESLLGACK…ERVNRSLDVA (71 aa).

This sequence belongs to the PPR family. PCMP-E subfamily.

The protein is Pentatricopeptide repeat-containing protein At4g18840 (PCMP-E101) of Arabidopsis thaliana (Mouse-ear cress).